The chain runs to 392 residues: Formate-dependent phosphoribosylglycinamide formyltransferase (392 aa).

N(1)-(5-phospho-beta-D-ribosyl)glycinamide contacts are provided by residues 22–23 (EL) and Glu-82. Residues Arg-114, Lys-155, 160 to 165 (SSGKGQ), 195 to 198 (EGVV), and Glu-203 each bind ATP. An ATP-grasp domain is found at 119–308 (RLAAEELGLP…EFALHVRAFL (190 aa)). Glu-267 and Glu-279 together coordinate Mg(2+). N(1)-(5-phospho-beta-D-ribosyl)glycinamide contacts are provided by residues Asp-286, Lys-355, and 362–363 (RR).

The protein belongs to the PurK/PurT family. As to quaternary structure, homodimer.

It catalyses the reaction N(1)-(5-phospho-beta-D-ribosyl)glycinamide + formate + ATP = N(2)-formyl-N(1)-(5-phospho-beta-D-ribosyl)glycinamide + ADP + phosphate + H(+). Its pathway is purine metabolism; IMP biosynthesis via de novo pathway; N(2)-formyl-N(1)-(5-phospho-D-ribosyl)glycinamide from N(1)-(5-phospho-D-ribosyl)glycinamide (formate route): step 1/1. Involved in the de novo purine biosynthesis. Catalyzes the transfer of formate to 5-phospho-ribosyl-glycinamide (GAR), producing 5-phospho-ribosyl-N-formylglycinamide (FGAR). Formate is provided by PurU via hydrolysis of 10-formyl-tetrahydrofolate. The polypeptide is Formate-dependent phosphoribosylglycinamide formyltransferase (Salmonella paratyphi B (strain ATCC BAA-1250 / SPB7)).